A 1013-amino-acid polypeptide reads, in one-letter code: Adhesion G-protein coupled receptor G2 (1013 aa).

The first 37 residues, 1 to 37 (MLFSGGQYSPVGRPEEVLLIYKIFLVIICFHAILVTS), serve as a signal peptide directing secretion. At 38-623 (LKENAGNSSL…TSLPPSQMMA (586 aa)) the chain is on the extracellular side. N-linked (GlcNAc...) asparagine glycosylation is found at Asn-44, Asn-78, Asn-92, Asn-104, Asn-128, Asn-137, Asn-155, Asn-179, Asn-187, Asn-366, Asn-431, Asn-452, Asn-457, Asn-524, Asn-538, Asn-543, Asn-547, and Asn-593. The region spanning 457 to 615 (NTTTFAAQDP…GILLDLSRTS (159 aa)) is the GAIN-B domain. Cystine bridges form between Cys-566/Cys-597 and Cys-585/Cys-599. A GPS region spans residues 566 to 615 (CVFWDLNRNGGRGGWSSDGCSVKEKRMNETICTCSHLTSFGILLDLSRTS). Positions 604-615 (SFGILLDLSRTS) are stachel. A helical transmembrane segment spans residues 624–644 (LTFITYIGCGLSSIFLSVTLV). Residues 645 to 663 (TYIAFEKIRRDYPSKILIQ) lie on the Cytoplasmic side of the membrane. The helical transmembrane segment at 664 to 684 (LCAALLLLNLVFLLDSWIALY) threads the bilayer. Residues 685-688 (NARG) lie on the Extracellular side of the membrane. Residues 689 to 709 (FCISVAVFLHYFLLVSFTWMG) form a helical membrane-spanning segment. Cysteines 690 and 774 form a disulfide. Topologically, residues 710–733 (LEAFHMYLALVKVFNTYIRKYILK) are cytoplasmic. Residues 734–754 (FCIVGWGIPAVVVSIVLTISP) form a helical membrane-spanning segment. The Extracellular portion of the chain corresponds to 755-785 (DNYGIGSYGKFPNGTPDDFCWINSSVVFYIT). A glycan (N-linked (GlcNAc...) asparagine) is linked at Asn-777. Residues 786–806 (VVGYFCVIFLLNVSMFIVVLV) form a helical membrane-spanning segment. The Cytoplasmic portion of the chain corresponds to 807-830 (QLCRIKKKKQLGAQRKTSIQDLRS). Residues 831–851 (IAGLTFLLGITWGFAFFAWGP) traverse the membrane as a helical segment. The Extracellular segment spans residues 852-853 (VN). Asn-853 carries an N-linked (GlcNAc...) asparagine glycan. A helical transmembrane segment spans residues 854–874 (LTFMYLFAIFNTLQGFFIFIF). Position 864 (Asn-864) interacts with 3beta-hydroxyandrost-5-en-17-one. The Cytoplasmic segment spans residues 875 to 1013 (YCAAKENVRK…RGSLHFIEQM (139 aa)). Residue Ser-1006 is modified to Phosphoserine.

It belongs to the G-protein coupled receptor 2 family. Adhesion G-protein coupled receptor (ADGR) subfamily. As to quaternary structure, heterodimer of 2 chains generated by proteolytic processing; the large extracellular N-terminal fragment and the membrane-bound C-terminal fragment predominantly remain associated and non-covalently linked. Interacts with CFTR. Post-translationally, proteolytically cleaved into 2 subunits, an extracellular subunit and a seven-transmembrane subunit. Highly glycosylated. Epididymis-specific expression (at protein level). Associated with apical membranes of efferent ductule and proximal epididymal duct epithelia.

The protein resides in the apical cell membrane. Forms a heterodimer of 2 chains generated by proteolytic processing that remain associated through non-covalent interactions mediated by the GAIN-B domain. In the inactivated receptor, the Stachel sequence (also named stalk) is embedded in the GAIN-B domain, where it adopts a beta-strand conformation. On activation, the Stachel moves into the 7 transmembrane region and adopts a twisted hook-shaped configuration that forms contacts within the receptor, leading to coupling of a G-alpha protein, which activates signaling. The cleaved GAIN-B and N-terminal domains can then dissociate from the rest of the receptor. Deoxycorticosterone (DOC) acts as an antagonist of ADGRG2. In terms of biological role, adhesion G-protein coupled receptor (aGPCR) for steroid hormones, such as dehydroepiandrosterone (DHEA; also named 3beta-hydroxyandrost-5-en-17-one) and androstenedione. Involved in a signal transduction pathway controlling epididymal function and male fertility. Ligand binding causes a conformation change that triggers signaling via guanine nucleotide-binding proteins (G proteins) and modulates the activity of downstream effectors, such as adenylate cyclase. ADGRG2 is coupled to G(s) G proteins and mediates activation of adenylate cyclase activity. Also able to couple with G(q) G proteins in vitro. May regulate fluid exchange within epididymis. The chain is Adhesion G-protein coupled receptor G2 from Rattus norvegicus (Rat).